A 311-amino-acid chain; its full sequence is MLSGLVIVDKPQGWTSHDVVGRMRRLAGTRKVGHAGTLDPMATGVLVLGINKATRLLTYIVGTSKTYTATIRLGETTITDDAEGEVTEARTAAHITDDAVAVGVAALTGPIQQVPSSVSAIKVNGERSYARVRSGEEVKLAARPVTIHRFDVHSITRIDGGRVVDVDVTVECSSGTYIRALARDLGNALGIGGHLTALRRTQVGPYSLDQARTLEELAEELEVLEMSLAARSLMPNRELSEQETTEISFGRRIAAGPGAGTPDAATAEKPAAAFAPSGELVALLADTGSFAKPVLVFAPGTGTGTGTGQAK.

Asp-39 serves as the catalytic Nucleophile. Residues 237 to 268 (RELSEQETTEISFGRRIAAGPGAGTPDAATAE) are disordered. The span at 254–268 (AAGPGAGTPDAATAE) shows a compositional bias: low complexity.

Belongs to the pseudouridine synthase TruB family. Type 1 subfamily.

The catalysed reaction is uridine(55) in tRNA = pseudouridine(55) in tRNA. Its function is as follows. Responsible for synthesis of pseudouridine from uracil-55 in the psi GC loop of transfer RNAs. The polypeptide is tRNA pseudouridine synthase B (Paenarthrobacter aurescens (strain TC1)).